The sequence spans 337 residues: Probable dihydroorotase (337 aa).

Histidine 12, histidine 14, lysine 95, histidine 132, histidine 170, and aspartate 240 together coordinate Zn(2+). Lysine 95 carries the N6-carboxylysine modification.

The protein belongs to the metallo-dependent hydrolases superfamily. DHOase family. Class II DHOase subfamily. The cofactor is Zn(2+).

It carries out the reaction (S)-dihydroorotate + H2O = N-carbamoyl-L-aspartate + H(+). Its pathway is pyrimidine metabolism; UMP biosynthesis via de novo pathway; (S)-dihydroorotate from bicarbonate: step 3/3. The sequence is that of Probable dihydroorotase (ura2) from Schizosaccharomyces pombe (strain 972 / ATCC 24843) (Fission yeast).